The following is a 176-amino-acid chain: Ribosome maturation factor RimM (176 aa).

Residues 93–166 form the PRC barrel domain; the sequence is ADEYYHADLI…QVVIEPPNEI (74 aa).

It belongs to the RimM family. As to quaternary structure, binds ribosomal protein uS19.

It is found in the cytoplasm. Functionally, an accessory protein needed during the final step in the assembly of 30S ribosomal subunit, possibly for assembly of the head region. Essential for efficient processing of 16S rRNA. May be needed both before and after RbfA during the maturation of 16S rRNA. It has affinity for free ribosomal 30S subunits but not for 70S ribosomes. The chain is Ribosome maturation factor RimM from Rhodopseudomonas palustris (strain ATCC BAA-98 / CGA009).